Reading from the N-terminus, the 280-residue chain is RAD52 motif-containing protein 1 (280 aa).

Residues 18–101 (KTIFIWDIQP…SPLKVRLSTK (84 aa)) enclose the RRM domain.

In terms of assembly, homodimer.

Its subcellular location is the nucleus. The protein localises to the cytoplasm. The protein resides in the nucleolus. In terms of biological role, may confer resistance to the antitumor agent cisplatin. Binds to DNA and RNA. In Danio rerio (Zebrafish), this protein is RAD52 motif-containing protein 1 (rdm1).